The following is an 810-amino-acid chain: Actin-regulating kinase PRK1 (810 aa).

Residues 22 to 298 (AKIIKYLTSG…CQVLEEVSRL (277 aa)) enclose the Protein kinase domain. Residues 28 to 36 (LTSGGFAQV) and lysine 56 contribute to the ATP site. Catalysis depends on aspartate 158, which acts as the Proton acceptor. Residues serine 402, serine 428, and serine 484 each carry the phosphoserine modification. Disordered stretches follow at residues 552–668 (FTGN…NVNI) and 733–761 (GVLD…HLRT). At threonine 553 the chain carries Phosphothreonine. Polar residues predominate over residues 553–566 (TGNSVNNSRSASFD). Serine 556 is subject to Phosphoserine. The segment covering 567–588 (NNNVNGNGNNTNRRLVSSSTSS) has biased composition (low complexity). Composition is skewed to basic and acidic residues over residues 594-612 (SDTK…EKRR) and 622-639 (FDQH…DYYR). A compositionally biased stretch (low complexity) spans 645 to 658 (KKTQASAKTTSKPT). Basic and acidic residues predominate over residues 733-748 (GVLDIKTKSNGKDKSR). An interaction with SH3 domain of ABP1 region spans residues 743 to 756 (GKDKSRPPRPPPKP).

Belongs to the protein kinase superfamily. Ser/Thr protein kinase family. In terms of assembly, interacts with ABP1, which is required for proper actin patch localization.

The protein resides in the cytoplasm. It is found in the cytoskeleton. It localises to the actin patch. It carries out the reaction L-seryl-[protein] + ATP = O-phospho-L-seryl-[protein] + ADP + H(+). The catalysed reaction is L-threonyl-[protein] + ATP = O-phospho-L-threonyl-[protein] + ADP + H(+). Its function is as follows. Protein kinase involved in the regulation of actin cytoskeleton organization and endocytosis. Phosphorylates PAN1 which disrupts the interaction between PAN1 and END3, and between PAN1 and SLA1. Phosphorylates SCD5. Preferentially, phosphorylates substrates on threonine residues in a [L/I/V/M]-x-x-[Q/N/T/S]-x-T-G motif. This is Actin-regulating kinase PRK1 (PRK1) from Saccharomyces cerevisiae (strain ATCC 204508 / S288c) (Baker's yeast).